The primary structure comprises 456 residues: Bifunctional protein GlmU (456 aa).

The interval 1–229 (MYKCALILAA…FEEILGVNSR (229 aa)) is pyrophosphorylase. UDP-N-acetyl-alpha-D-glucosamine is bound by residues 8–11 (LAAG), Lys22, Gln73, and 78–79 (GT). Asp103 contributes to the Mg(2+) binding site. Positions 140, 155, 170, and 227 each coordinate UDP-N-acetyl-alpha-D-glucosamine. Asn227 lines the Mg(2+) pocket. The tract at residues 230 to 250 (LQLCQVGKVMQKRINEKHMEN) is linker. The segment at 251–456 (GSTLIDPDNT…GWVDKKGLLK (206 aa)) is N-acetyltransferase. UDP-N-acetyl-alpha-D-glucosamine-binding residues include Arg332 and Lys350. The Proton acceptor role is filled by His362. The UDP-N-acetyl-alpha-D-glucosamine site is built by Tyr365 and Asn376. Residues 385-386 (NY), Ala422, and Arg439 each bind acetyl-CoA.

In the N-terminal section; belongs to the N-acetylglucosamine-1-phosphate uridyltransferase family. It in the C-terminal section; belongs to the transferase hexapeptide repeat family. Homotrimer. Requires Mg(2+) as cofactor.

The protein resides in the cytoplasm. The catalysed reaction is alpha-D-glucosamine 1-phosphate + acetyl-CoA = N-acetyl-alpha-D-glucosamine 1-phosphate + CoA + H(+). It catalyses the reaction N-acetyl-alpha-D-glucosamine 1-phosphate + UTP + H(+) = UDP-N-acetyl-alpha-D-glucosamine + diphosphate. The protein operates within nucleotide-sugar biosynthesis; UDP-N-acetyl-alpha-D-glucosamine biosynthesis; N-acetyl-alpha-D-glucosamine 1-phosphate from alpha-D-glucosamine 6-phosphate (route II): step 2/2. It functions in the pathway nucleotide-sugar biosynthesis; UDP-N-acetyl-alpha-D-glucosamine biosynthesis; UDP-N-acetyl-alpha-D-glucosamine from N-acetyl-alpha-D-glucosamine 1-phosphate: step 1/1. It participates in bacterial outer membrane biogenesis; LPS lipid A biosynthesis. In terms of biological role, catalyzes the last two sequential reactions in the de novo biosynthetic pathway for UDP-N-acetylglucosamine (UDP-GlcNAc). The C-terminal domain catalyzes the transfer of acetyl group from acetyl coenzyme A to glucosamine-1-phosphate (GlcN-1-P) to produce N-acetylglucosamine-1-phosphate (GlcNAc-1-P), which is converted into UDP-GlcNAc by the transfer of uridine 5-monophosphate (from uridine 5-triphosphate), a reaction catalyzed by the N-terminal domain. In Clostridium acetobutylicum (strain ATCC 824 / DSM 792 / JCM 1419 / IAM 19013 / LMG 5710 / NBRC 13948 / NRRL B-527 / VKM B-1787 / 2291 / W), this protein is Bifunctional protein GlmU.